We begin with the raw amino-acid sequence, 207 residues long: Protein YABBY 6 (207 aa).

The C4-type zinc-finger motif lies at 16 to 43 (CNFCNTILAVSVPGNSMLNIVTVRCGHC).

This sequence belongs to the YABBY family. In terms of tissue distribution, expressed in leaf blades, leaf sheaths and flowers.

The protein localises to the nucleus. The sequence is that of Protein YABBY 6 (YAB6) from Oryza sativa subsp. japonica (Rice).